We begin with the raw amino-acid sequence, 575 residues long: Lysine--tRNA ligase (575 aa).

Residues E412 and E419 each contribute to the Mg(2+) site.

The protein belongs to the class-II aminoacyl-tRNA synthetase family. Homodimer. Requires Mg(2+) as cofactor.

The protein resides in the cytoplasm. It catalyses the reaction tRNA(Lys) + L-lysine + ATP = L-lysyl-tRNA(Lys) + AMP + diphosphate. The chain is Lysine--tRNA ligase from Bacteroides fragilis (strain ATCC 25285 / DSM 2151 / CCUG 4856 / JCM 11019 / LMG 10263 / NCTC 9343 / Onslow / VPI 2553 / EN-2).